The sequence spans 244 residues: Large ribosomal subunit protein uL30B (244 aa).

Over residues 1 to 11 (MSTEKILTPES) the composition is skewed to polar residues. The disordered stretch occupies residues 1–21 (MSTEKILTPESQLKKTKAQQK).

This sequence belongs to the universal ribosomal protein uL30 family. Component of the large ribosomal subunit (LSU). Mature yeast ribosomes consist of a small (40S) and a large (60S) subunit. The 40S small subunit contains 1 molecule of ribosomal RNA (18S rRNA) and 33 different proteins (encoded by 57 genes). The large 60S subunit contains 3 rRNA molecules (25S, 5.8S and 5S rRNA) and 46 different proteins (encoded by 81 genes).

The protein localises to the cytoplasm. In terms of biological role, component of the ribosome, a large ribonucleoprotein complex responsible for the synthesis of proteins in the cell. The small ribosomal subunit (SSU) binds messenger RNAs (mRNAs) and translates the encoded message by selecting cognate aminoacyl-transfer RNA (tRNA) molecules. The large subunit (LSU) contains the ribosomal catalytic site termed the peptidyl transferase center (PTC), which catalyzes the formation of peptide bonds, thereby polymerizing the amino acids delivered by tRNAs into a polypeptide chain. The nascent polypeptides leave the ribosome through a tunnel in the LSU and interact with protein factors that function in enzymatic processing, targeting, and the membrane insertion of nascent chains at the exit of the ribosomal tunnel. This Saccharomyces cerevisiae (strain ATCC 204508 / S288c) (Baker's yeast) protein is Large ribosomal subunit protein uL30B.